A 360-amino-acid polypeptide reads, in one-letter code: Membrane-bound lytic murein transglycosylase C (360 aa).

A signal peptide spans 1–16 (MKKFFALALVAPLLIS). A lipid anchor (N-palmitoyl cysteine) is attached at Cys-17. Cys-17 is lipidated: S-diacylglycerol cysteine.

This sequence belongs to the transglycosylase Slt family.

It localises to the cell outer membrane. It catalyses the reaction Exolytic cleavage of the (1-&gt;4)-beta-glycosidic linkage between N-acetylmuramic acid (MurNAc) and N-acetylglucosamine (GlcNAc) residues in peptidoglycan, from either the reducing or the non-reducing ends of the peptidoglycan chains, with concomitant formation of a 1,6-anhydrobond in the MurNAc residue.. Its function is as follows. Murein-degrading enzyme. May play a role in recycling of muropeptides during cell elongation and/or cell division. The polypeptide is Membrane-bound lytic murein transglycosylase C (Citrobacter koseri (strain ATCC BAA-895 / CDC 4225-83 / SGSC4696)).